An 84-amino-acid polypeptide reads, in one-letter code: Cell division topological specificity factor (84 aa).

It belongs to the MinE family.

Functionally, prevents the cell division inhibition by proteins MinC and MinD at internal division sites while permitting inhibition at polar sites. This ensures cell division at the proper site by restricting the formation of a division septum at the midpoint of the long axis of the cell. This chain is Cell division topological specificity factor, found in Pseudomonas fluorescens (strain SBW25).